A 457-amino-acid polypeptide reads, in one-letter code: ATP synthase subunit beta (457 aa).

An ATP-binding site is contributed by 147–154 (GGAGVGKT).

Belongs to the ATPase alpha/beta chains family. In terms of assembly, F-type ATPases have 2 components, CF(1) - the catalytic core - and CF(0) - the membrane proton channel. CF(1) has five subunits: alpha(3), beta(3), gamma(1), delta(1), epsilon(1). CF(0) has three main subunits: a(1), b(2) and c(9-12). The alpha and beta chains form an alternating ring which encloses part of the gamma chain. CF(1) is attached to CF(0) by a central stalk formed by the gamma and epsilon chains, while a peripheral stalk is formed by the delta and b chains.

Its subcellular location is the cell inner membrane. The enzyme catalyses ATP + H2O + 4 H(+)(in) = ADP + phosphate + 5 H(+)(out). Functionally, produces ATP from ADP in the presence of a proton gradient across the membrane. The catalytic sites are hosted primarily by the beta subunits. In Histophilus somni (strain 129Pt) (Haemophilus somnus), this protein is ATP synthase subunit beta.